Reading from the N-terminus, the 187-residue chain is MSDEIEIDTDDLERRMKGAMESLRHEFASLRTGRASASMVEPIMVDAYGSPTPINQIGTVNVPEPRMVTINIWDKGLVGKAEKAIRESGLGINPQLNGTIIMLPIPELNEERRRELTRVAAQYAEHARVAIRNVRRDGMDQIKKAKSSGMSEDDQKFWEGAVQELTDKMIASVDQALEAKQAEIMQV.

This sequence belongs to the RRF family.

It localises to the cytoplasm. Functionally, responsible for the release of ribosomes from messenger RNA at the termination of protein biosynthesis. May increase the efficiency of translation by recycling ribosomes from one round of translation to another. The sequence is that of Ribosome-recycling factor from Paracoccus denitrificans (strain Pd 1222).